A 206-amino-acid polypeptide reads, in one-letter code: LexA repressor (206 aa).

Positions 28–48 (RAEIATRLGFKSANAAEEHLK) form a DNA-binding region, H-T-H motif. Catalysis depends on for autocatalytic cleavage activity residues S123 and K160.

Belongs to the peptidase S24 family. As to quaternary structure, homodimer.

It catalyses the reaction Hydrolysis of Ala-|-Gly bond in repressor LexA.. Functionally, represses a number of genes involved in the response to DNA damage (SOS response), including recA and lexA. In the presence of single-stranded DNA, RecA interacts with LexA causing an autocatalytic cleavage which disrupts the DNA-binding part of LexA, leading to derepression of the SOS regulon and eventually DNA repair. The polypeptide is LexA repressor (Shewanella sp. (strain ANA-3)).